Reading from the N-terminus, the 283-residue chain is NFU1 iron-sulfur cluster scaffold homolog, mitochondrial (283 aa).

A mitochondrion-targeting transit peptide spans 1 to 30 (MSKFLSQAALNTLRNTRLGSRQLVRSFAGI). Positions 182-250 (IKELLDTRIR…IPEVESVEQV (69 aa)) are nifU. [4Fe-4S] cluster contacts are provided by cysteine 219 and cysteine 222.

Belongs to the NifU family.

Its subcellular location is the mitochondrion. Functionally, molecular scaffold for [Fe-S] cluster assembly of mitochondrial iron-sulfur proteins. In Drosophila yakuba (Fruit fly), this protein is NFU1 iron-sulfur cluster scaffold homolog, mitochondrial.